Here is a 322-residue protein sequence, read N- to C-terminus: Quinolinate synthase (322 aa).

Iminosuccinate is bound by residues H37 and S54. C99 lines the [4Fe-4S] cluster pocket. Iminosuccinate is bound by residues 125-127 (YIN) and S142. C185 is a [4Fe-4S] cluster binding site. Iminosuccinate-binding positions include 211–213 (HPE) and T228. Residue C278 coordinates [4Fe-4S] cluster.

It belongs to the quinolinate synthase family. Type 2 subfamily. [4Fe-4S] cluster is required as a cofactor.

It is found in the cytoplasm. The catalysed reaction is iminosuccinate + dihydroxyacetone phosphate = quinolinate + phosphate + 2 H2O + H(+). The protein operates within cofactor biosynthesis; NAD(+) biosynthesis; quinolinate from iminoaspartate: step 1/1. Functionally, catalyzes the condensation of iminoaspartate with dihydroxyacetone phosphate to form quinolinate. The polypeptide is Quinolinate synthase (Prosthecochloris aestuarii (strain DSM 271 / SK 413)).